A 332-amino-acid chain; its full sequence is MAALKDQLIVNLLKEEQVPQNKITVVGVGAVGMACAISILMKDLADELALVDVIEDKLKGEMMDLQHGSLFLKTPKIVSSKDYSVTANSKLVIITAGARQQEGESRLNLVQRNVNIFKFIIPNVVKYSPQCKLLIVSNPVDILTYVAWKISGFPKNRVIGSGCNLDSARFRYLMGERLGVHPLSCHGWVLGEHGDSSVPVWSGVNVAGVSLKSLNPQLGTDADKEQWKDVHKQVVDSAYEVIKLKGYTSWAIGLSVADLAESIMKNLRRVHPISTMIKGLYGIKEDVFLSVPCILGQNGISDVVKVTLTPDEEARLKKSADTLWGIQKELQF.

A2 is subject to N-acetylalanine. Position 5 is an N6-acetyllysine; alternate (K5). N6-succinyllysine; alternate is present on K5. K14 is subject to N6-acetyllysine. Residue 29–57 (GAVGMACAISILMKDLADELALVDVIEDK) participates in NAD(+) binding. K57 carries the post-translational modification N6-acetyllysine; alternate. A Glycyl lysine isopeptide (Lys-Gly) (interchain with G-Cter in SUMO2); alternate cross-link involves residue K57. K81 is subject to N6-acetyllysine. R99 contributes to the NAD(+) binding site. R106 serves as a coordination point for substrate. An N6-acetyllysine; alternate modification is found at K118. N6-succinyllysine; alternate is present on K118. N6-acetyllysine is present on K126. N138 lines the NAD(+) pocket. Substrate is bound by residues N138 and R169. Residue H193 is the Proton acceptor of the active site. S213 bears the Phosphoserine mark. N6-acetyllysine is present on residues K224 and K232. The residue at position 239 (Y239) is a Phosphotyrosine. N6-acetyllysine is present on K243. Residue T248 coordinates substrate. At T309 the chain carries Phosphothreonine. Position 318 is an N6-acetyllysine; alternate (K318). N6-succinyllysine; alternate is present on K318. Position 322 is a phosphothreonine (T322).

This sequence belongs to the LDH/MDH superfamily. LDH family. In terms of assembly, homotetramer. Interacts with PTEN upstream reading frame protein MP31. ISGylated.

Its subcellular location is the cytoplasm. It catalyses the reaction (S)-lactate + NAD(+) = pyruvate + NADH + H(+). It functions in the pathway fermentation; pyruvate fermentation to lactate; (S)-lactate from pyruvate: step 1/1. Functionally, interconverts simultaneously and stereospecifically pyruvate and lactate with concomitant interconversion of NADH and NAD(+). This Rattus norvegicus (Rat) protein is L-lactate dehydrogenase A chain (Ldha).